The primary structure comprises 505 residues: Maturase K (505 aa).

Belongs to the intron maturase 2 family. MatK subfamily.

It localises to the plastid. The protein localises to the chloroplast. Functionally, usually encoded in the trnK tRNA gene intron. Probably assists in splicing its own and other chloroplast group II introns. The protein is Maturase K of Phaulothamnus spinescens (Snake-eyes).